A 236-amino-acid chain; its full sequence is MASEKGPSNKDYTLRRRIEPWEFEVFFDPQELRKEACLLYEIKWGASSKTWRSSGKNTTNHVEVNFLEKLTSEGRLGPSTCCSITWFLSWSPCWECSMAIREFLSQHPGVTLIIFVARLFQHMDRRNRQGLKDLVTSGVTVRVMSVSEYCYCWENFVNYPPGKAAQWPRYPPRWMLMYALELYCIILGLPPCLKISRRHQKQLTFFSLTPQYCHYKMIPPYILLATGLLQPSVPWR.

Residues 10–134 enclose the CMP/dCMP-type deaminase domain; that stretch reads KDYTLRRRIE…RRNRQGLKDL (125 aa). Position 61 (histidine 61) interacts with Zn(2+). Glutamate 63 (proton donor) is an active-site residue. The Zn(2+) site is built by cysteine 93 and cysteine 96.

This sequence belongs to the cytidine and deoxycytidylate deaminase family. Homodimer. Interacts with A1CF; form an mRNA editing complex. Interacts with RBM47; form an mRNA editing complex. Found in a complex with CELF2/CUGBP2 and A1CF. Interacts with HNRPAB. Interacts with SYNCRIP. Zn(2+) serves as cofactor. As to expression, expressed exclusively in the intestine.

The protein resides in the cytoplasm. It is found in the nucleus. It carries out the reaction a cytidine in mRNA + H2O + H(+) = a uridine in mRNA + NH4(+). The enzyme catalyses cytidine(6666) in apoB mRNA + H2O + H(+) = uridine(6666) in apoB mRNA + NH4(+). Cytidine deaminase catalyzing the cytidine to uridine postranscriptional editing of a variety of mRNAs. Form complexes with cofactors that confer differential editing activity and selectivity. Responsible for the postranscriptional editing of a CAA codon for Gln to a UAA codon for stop in the apolipoprotein B mRNA. Also involved in CGA (Arg) to UGA (Stop) editing in the NF1 mRNA. May also play a role in the epigenetic regulation of gene expression by participating in DNA demethylation. The chain is C-&gt;U-editing enzyme APOBEC-1 from Oryctolagus cuniculus (Rabbit).